The following is a 791-amino-acid chain: Solute carrier family 26 member 9 (791 aa).

Topologically, residues 1 to 70 are cytoplasmic; the sequence is MSQPRPRYVV…WLPKYKIKDY (70 aa). The helical transmembrane segment at 71-96 threads the bilayer; sequence IIPDLLGGLSGGSIQVPQGMAFALLA. Residues 97–99 are Extracellular-facing; that stretch reads NLP. Residues 100-117 traverse the membrane as a helical segment; sequence AVNGLYSSFFPLLTYFFL. Over 118–128 the chain is Cytoplasmic; it reads GGVHQMVPGTF. A helical membrane pass occupies residues 129–142; that stretch reads AVISILVGNICLQL. The Extracellular portion of the chain corresponds to 143-171; it reads APESKFQVFNNATNESYVDTAAMEAERLH. Residues 172–190 traverse the membrane as a helical segment; the sequence is VSATLACLTAIIQMGLGFM. At 191–202 the chain is on the cytoplasmic side; that stretch reads QFGFVAIYLSES. Residues 203–224 traverse the membrane as a helical segment; that stretch reads FIRGFMTAAGLQILISVLKYIF. Residues 225–235 lie on the Extracellular side of the membrane; the sequence is GLTIPSYTGPG. The helical intramembrane region spans 236–244; that stretch reads SIVFTFIDI. Residues 245–254 are Extracellular-facing; that stretch reads CKNLPHTNIA. A helical transmembrane segment spans residues 255–273; it reads SLIFALISGAFLVLVKELN. Residues 274 to 281 lie on the Cytoplasmic side of the membrane; that stretch reads ARYMHKIR. Residues 282–297 form a helical membrane-spanning segment; it reads FPIPTEMIVVVVATAI. The Extracellular segment spans residues 298-327; sequence SGGCKMPKKYHMQIVGEIQRGFPTPVSPVV. Residues 328-348 traverse the membrane as a helical segment; the sequence is SQWKDMIGTAFSLAIVSYVIN. At 349-366 the chain is on the cytoplasmic side; sequence LAMGRTLANKHGYDVDSN. A helical transmembrane segment spans residues 367 to 382; the sequence is QEMIALGCSNFFGSFF. Residues 383–390 lie on the Extracellular side of the membrane; that stretch reads KIHVICCA. A helical transmembrane segment spans residues 391-400; it reads LSVTLAVDGA. Residues 401–404 are Cytoplasmic-facing; sequence GGKS. A helical membrane pass occupies residues 405-423; the sequence is QVASLCVSLVVMITMLVLG. At 424 to 428 the chain is on the extracellular side; that stretch reads IYLYP. The chain crosses the membrane as a helical span at residues 429 to 450; it reads LPKSVLGALIAVNLKNSLKQLT. At 451-464 the chain is on the cytoplasmic side; it reads DPYYLWRKSKLDCC. A helical membrane pass occupies residues 465–476; sequence IWVVSFLSSFFL. Residue serine 477 is a topological domain, extracellular. Residues 478–489 form a helical membrane-spanning segment; sequence LPYGVAVGVAFS. At 490–791 the chain is on the cytoplasmic side; the sequence is VLVVVFQTQF…MFHAETLTAL (302 aa). An STAS domain is found at 519 to 737; that stretch reads TYNRAQDIQG…PSIHDAVLFA (219 aa). The segment at 602–650 is disordered; it reads FENAPPTDPNNNQTPANGTSVSYITFSPDSSSPAQSEPPASAEAPGEPS. A compositionally biased stretch (polar residues) spans 610-626; the sequence is PNNNQTPANGTSVSYIT. Low complexity predominate over residues 628-650; it reads SPDSSSPAQSEPPASAEAPGEPS.

Belongs to the SLC26A/SulP transporter (TC 2.A.53) family. Homodimer. As to expression, predominantly expressed in lung at the luminal side of the bronchiolar and alveolar epithelium of lung. To a lower extent, also expressed in pancreas and prostate.

Its subcellular location is the cell membrane. It localises to the endomembrane system. The catalysed reaction is chloride(in) = chloride(out). It carries out the reaction hydrogencarbonate(in) + chloride(out) = hydrogencarbonate(out) + chloride(in). Its activity is regulated as follows. Inhibited by ammonium and thiosulfate. Its function is as follows. Ion transporter that can act both as an ion channel and anion exchanger. Mainly acts as a chloride channel, which mediate uncoupled chloride anion transport in an alternate-access mechanism where a saturable binding site is alternately exposed to either one or the other side of the membrane. Also acts as a DIDS- and thiosulfate- sensitive anion exchanger the exchange of chloride for bicarbonate ions across the cell membrane. In Homo sapiens (Human), this protein is Solute carrier family 26 member 9.